A 276-amino-acid polypeptide reads, in one-letter code: 5-deoxy-glucuronate isomerase (276 aa).

This sequence belongs to the isomerase IolB family.

The enzyme catalyses 5-deoxy-D-glucuronate = 5-dehydro-2-deoxy-D-gluconate. The protein operates within polyol metabolism; myo-inositol degradation into acetyl-CoA; acetyl-CoA from myo-inositol: step 4/7. Functionally, involved in the isomerization of 5-deoxy-glucuronate (5DG) to 5-dehydro-2-deoxy-D-gluconate (DKG or 2-deoxy-5-keto-D-gluconate). The sequence is that of 5-deoxy-glucuronate isomerase from Geobacillus kaustophilus (strain HTA426).